The following is a 449-amino-acid chain: Heterogeneous nuclear ribonucleoprotein H2 (449 aa).

N-acetylmethionine is present on methionine 1. The residue at position 2 (methionine 2) is an N-acetylmethionine; in Heterogeneous nuclear ribonucleoprotein H2, N-terminally processed. An RRM 1 domain is found at 11 to 90 (FVVKVRGLPW…RYVEVFKSNS (80 aa)). Serine 23 carries the phosphoserine modification. Lysine 35 participates in a covalent cross-link: Glycyl lysine isopeptide (Lys-Gly) (interchain with G-Cter in SUMO2). Phosphoserine is present on residues serine 54 and serine 63. Lysine 87 participates in a covalent cross-link: Glycyl lysine isopeptide (Lys-Gly) (interchain with G-Cter in SUMO2). The residue at position 90 (serine 90) is a Phosphoserine. A Glycyl lysine isopeptide (Lys-Gly) (interchain with G-Cter in SUMO2) cross-link involves residue lysine 98. The RRM 2 domain maps to 111 to 188 (GFVRLRGLPF…RYIEIFKSSR (78 aa)). Arginine 233 carries the post-translational modification Dimethylated arginine; alternate. Residue arginine 233 is modified to Omega-N-methylarginine; alternate. A 1-1 repeat occupies 234-249 (GAYGGGYGGYDDYGGY). Residues 234–433 (GAYGGGYGGY…YGGQSSMSGY (200 aa)) are 2 X 16 AA Gly-rich approximate repeats. Tyrosine 246 carries the phosphotyrosine modification. The 76-residue stretch at 289-364 (HCVHMRGLPY…RYVELFLNST (76 aa)) folds into the RRM 3 domain. The residue at position 310 (serine 310) is a Phosphoserine. Repeat copies occupy residues 354–372 (HRYV…GGAY), 374–392 (HSYV…GGAY), and 418–433 (GGYG…MSGY). Residues 354-392 (HRYVELFLNSTAGTSGGAYDHSYVELFLNSTAGASGGAY) are 2 X 19 AA perfect repeats.

Component of a ribonucleoprotein complex containing mRNAs and RNA-binding proteins including DDX5, HNRNPH2 and SRSF1 as well as splicing regulator ARVCF. Interacts with TXNL4/DIM1.

The protein localises to the nucleus. It localises to the nucleoplasm. Functionally, this protein is a component of the heterogeneous nuclear ribonucleoprotein (hnRNP) complexes which provide the substrate for the processing events that pre-mRNAs undergo before becoming functional, translatable mRNAs in the cytoplasm. Binds poly(RG). This Mus musculus (Mouse) protein is Heterogeneous nuclear ribonucleoprotein H2 (Hnrnph2).